The sequence spans 1450 residues: DNA-directed RNA polymerase RPB1 homolog (1450 aa).

The protein belongs to the RNA polymerase beta' chain family. Part of the viral DNA-directed RNA polymerase that consists of 8 polII-like subunits (RPB1, RPB2, RPB3, RPB5, RPB6, RPB7, RPB9, RPB10), a capping enzyme and a termination factor.

It localises to the virion. The catalysed reaction is RNA(n) + a ribonucleoside 5'-triphosphate = RNA(n+1) + diphosphate. Its function is as follows. Catalytic component of the DNA-directed RNA polymerase (RNAP) that catalyzes the transcription in the cytoplasm of viral DNA into RNA using the four ribonucleoside triphosphates as substrates. Forms the polymerase active center together with RPB2. Part of the core element with the central large cleft, the clamp element that moves to open and close the cleft and the jaws that are thought to grab the incoming DNA template. The chain is DNA-directed RNA polymerase RPB1 homolog from African swine fever virus (isolate Tick/South Africa/Pretoriuskop Pr4/1996) (ASFV).